We begin with the raw amino-acid sequence, 248 residues long: Probable septum site-determining protein MinC (248 aa).

The interval 115-144 (PTAVSPPPPPPPPARAEPAPPAARPAPGRM) is disordered. Over residues 118 to 138 (VSPPPPPPPPARAEPAPPAAR) the composition is skewed to pro residues.

This sequence belongs to the MinC family. Interacts with MinD and FtsZ.

Cell division inhibitor that blocks the formation of polar Z ring septums. Rapidly oscillates between the poles of the cell to destabilize FtsZ filaments that have formed before they mature into polar Z rings. Prevents FtsZ polymerization. The sequence is that of Probable septum site-determining protein MinC from Xanthomonas euvesicatoria pv. vesicatoria (strain 85-10) (Xanthomonas campestris pv. vesicatoria).